A 150-amino-acid chain; its full sequence is Nucleoside diphosphate kinase (150 aa).

ATP contacts are provided by K10, F58, R86, T92, R103, and N113. H116 acts as the Pros-phosphohistidine intermediate in catalysis.

The protein belongs to the NDK family. Homohexamer. Mg(2+) is required as a cofactor.

It carries out the reaction a 2'-deoxyribonucleoside 5'-diphosphate + ATP = a 2'-deoxyribonucleoside 5'-triphosphate + ADP. The catalysed reaction is a ribonucleoside 5'-diphosphate + ATP = a ribonucleoside 5'-triphosphate + ADP. In terms of biological role, major role in the synthesis of nucleoside triphosphates other than ATP. The ATP gamma phosphate is transferred to the NDP beta phosphate via a ping-pong mechanism, using a phosphorylated active-site intermediate. The protein is Nucleoside diphosphate kinase (awd) of Drosophila yakuba (Fruit fly).